Here is a 175-residue protein sequence, read N- to C-terminus: ATP synthase subunit delta (175 aa).

Belongs to the ATPase delta chain family. F-type ATPases have 2 components, F(1) - the catalytic core - and F(0) - the membrane proton channel. F(1) has five subunits: alpha(3), beta(3), gamma(1), delta(1), epsilon(1). F(0) has three main subunits: a(1), b(2) and c(10-14). The alpha and beta chains form an alternating ring which encloses part of the gamma chain. F(1) is attached to F(0) by a central stalk formed by the gamma and epsilon chains, while a peripheral stalk is formed by the delta and b chains.

Its subcellular location is the cell membrane. Its function is as follows. F(1)F(0) ATP synthase produces ATP from ADP in the presence of a proton or sodium gradient. F-type ATPases consist of two structural domains, F(1) containing the extramembraneous catalytic core and F(0) containing the membrane proton channel, linked together by a central stalk and a peripheral stalk. During catalysis, ATP synthesis in the catalytic domain of F(1) is coupled via a rotary mechanism of the central stalk subunits to proton translocation. This protein is part of the stalk that links CF(0) to CF(1). It either transmits conformational changes from CF(0) to CF(1) or is implicated in proton conduction. This Lactococcus lactis subsp. lactis (strain IL1403) (Streptococcus lactis) protein is ATP synthase subunit delta.